Consider the following 158-residue polypeptide: Heavy metal-associated isoprenylated plant protein 23 (158 aa).

One can recognise an HMA domain in the interval 31 to 94 (FQTVELKVRM…KAKATGKKAE (64 aa)). A metal cation contacts are provided by C42 and C45. C155 is subject to Cysteine methyl ester. Residue C155 is the site of S-farnesyl cysteine attachment. Residues 156 to 158 (SIM) constitute a propeptide, removed in mature form.

This sequence belongs to the HIPP family. As to quaternary structure, interacts with ZHD11/HB29.

In terms of biological role, heavy-metal-binding protein. This is Heavy metal-associated isoprenylated plant protein 23 from Arabidopsis thaliana (Mouse-ear cress).